The primary structure comprises 134 residues: Probable salivary secreted peptide (134 aa).

Positions 1 to 24 are cleaved as a signal peptide; the sequence is MGAQKTIAYLAIIAIAVIFAQVNT.

The protein resides in the secreted. The sequence is that of Probable salivary secreted peptide from Bombus ignitus (Bumblebee).